The primary structure comprises 573 residues: Urease subunit alpha (573 aa).

The 438-residue stretch at 136-573 (GGIDCHVHFI…LPMAQRYFLF (438 aa)) folds into the Urease domain. Ni(2+)-binding residues include His-141, His-143, and Lys-224. Lys-224 is subject to N6-carboxylysine. His-226 contributes to the substrate binding site. The Ni(2+) site is built by His-253 and His-279. His-327 serves as the catalytic Proton donor. Position 367 (Asp-367) interacts with Ni(2+).

The protein belongs to the metallo-dependent hydrolases superfamily. Urease alpha subunit family. As to quaternary structure, heterotrimer of UreA (gamma), UreB (beta) and UreC (alpha) subunits. Three heterotrimers associate to form the active enzyme. Ni cation is required as a cofactor. Carboxylation allows a single lysine to coordinate two nickel ions.

It localises to the cytoplasm. It catalyses the reaction urea + 2 H2O + H(+) = hydrogencarbonate + 2 NH4(+). It functions in the pathway nitrogen metabolism; urea degradation; CO(2) and NH(3) from urea (urease route): step 1/1. This is Urease subunit alpha from Rhodococcus opacus (strain B4).